Reading from the N-terminus, the 220-residue chain is Deoxyribose-phosphate aldolase (220 aa).

Residue Asp-89 is the Proton donor/acceptor of the active site. Lys-151 serves as the catalytic Schiff-base intermediate with acetaldehyde. Lys-180 (proton donor/acceptor) is an active-site residue.

This sequence belongs to the DeoC/FbaB aldolase family. DeoC type 1 subfamily.

It is found in the cytoplasm. The enzyme catalyses 2-deoxy-D-ribose 5-phosphate = D-glyceraldehyde 3-phosphate + acetaldehyde. Its pathway is carbohydrate degradation; 2-deoxy-D-ribose 1-phosphate degradation; D-glyceraldehyde 3-phosphate and acetaldehyde from 2-deoxy-alpha-D-ribose 1-phosphate: step 2/2. Its function is as follows. Catalyzes a reversible aldol reaction between acetaldehyde and D-glyceraldehyde 3-phosphate to generate 2-deoxy-D-ribose 5-phosphate. This is Deoxyribose-phosphate aldolase from Streptococcus gordonii (strain Challis / ATCC 35105 / BCRC 15272 / CH1 / DL1 / V288).